The following is a 272-amino-acid chain: 2,3,4,5-tetrahydropyridine-2,6-dicarboxylate N-succinyltransferase (272 aa).

Arginine 104 and aspartate 141 together coordinate substrate.

Belongs to the transferase hexapeptide repeat family. As to quaternary structure, homotrimer.

It is found in the cytoplasm. The enzyme catalyses (S)-2,3,4,5-tetrahydrodipicolinate + succinyl-CoA + H2O = (S)-2-succinylamino-6-oxoheptanedioate + CoA. The protein operates within amino-acid biosynthesis; L-lysine biosynthesis via DAP pathway; LL-2,6-diaminopimelate from (S)-tetrahydrodipicolinate (succinylase route): step 1/3. The protein is 2,3,4,5-tetrahydropyridine-2,6-dicarboxylate N-succinyltransferase of Dechloromonas aromatica (strain RCB).